The following is a 188-amino-acid chain: Photosystem I assembly protein Ycf4 (188 aa).

2 helical membrane-spanning segments follow: residues Tyr26–Ser46 and Leu68–Ile88.

Belongs to the Ycf4 family.

It is found in the cellular thylakoid membrane. Seems to be required for the assembly of the photosystem I complex. This Synechococcus sp. (strain ATCC 27144 / PCC 6301 / SAUG 1402/1) (Anacystis nidulans) protein is Photosystem I assembly protein Ycf4.